A 288-amino-acid chain; its full sequence is Energy-coupling factor transporter ATP-binding protein EcfA2 (288 aa).

Residues 3 to 243 (IVFEAVSHIY…RAELEAIGLG (241 aa)) enclose the ABC transporter domain. 40 to 47 (GPTGSGKS) is a binding site for ATP.

The protein belongs to the ABC transporter superfamily. Energy-coupling factor EcfA family. As to quaternary structure, forms a stable energy-coupling factor (ECF) transporter complex composed of 2 membrane-embedded substrate-binding proteins (S component), 2 ATP-binding proteins (A component) and 2 transmembrane proteins (T component).

Its subcellular location is the cell membrane. Functionally, ATP-binding (A) component of a common energy-coupling factor (ECF) ABC-transporter complex. Unlike classic ABC transporters this ECF transporter provides the energy necessary to transport a number of different substrates. This chain is Energy-coupling factor transporter ATP-binding protein EcfA2, found in Symbiobacterium thermophilum (strain DSM 24528 / JCM 14929 / IAM 14863 / T).